The primary structure comprises 178 residues: Inorganic pyrophosphatase (178 aa).

Residues Lys31, Arg45, and Tyr57 each contribute to the substrate site. Residues Asp67, Asp72, and Asp104 each coordinate Mg(2+). Position 141 (Tyr141) interacts with substrate.

Belongs to the PPase family. Homohexamer. Requires Mg(2+) as cofactor.

Its subcellular location is the cytoplasm. It catalyses the reaction diphosphate + H2O = 2 phosphate + H(+). Catalyzes the hydrolysis of inorganic pyrophosphate (PPi) forming two phosphate ions. This is Inorganic pyrophosphatase from Leptospira interrogans serogroup Icterohaemorrhagiae serovar copenhageni (strain Fiocruz L1-130).